The following is an 87-amino-acid chain: Small ribosomal subunit protein bS20 (87 aa).

Residues 1-29 (MANTAQARKRARQAVKQNAHNSSQRSTLR) are disordered. Positions 20–29 (HNSSQRSTLR) are enriched in polar residues.

The protein belongs to the bacterial ribosomal protein bS20 family.

Its function is as follows. Binds directly to 16S ribosomal RNA. In Janthinobacterium sp. (strain Marseille) (Minibacterium massiliensis), this protein is Small ribosomal subunit protein bS20.